A 274-amino-acid polypeptide reads, in one-letter code: 2,3,4,5-tetrahydropyridine-2,6-dicarboxylate N-succinyltransferase (274 aa).

2 residues coordinate substrate: arginine 104 and aspartate 141.

It belongs to the transferase hexapeptide repeat family. In terms of assembly, homotrimer.

Its subcellular location is the cytoplasm. It catalyses the reaction (S)-2,3,4,5-tetrahydrodipicolinate + succinyl-CoA + H2O = (S)-2-succinylamino-6-oxoheptanedioate + CoA. It functions in the pathway amino-acid biosynthesis; L-lysine biosynthesis via DAP pathway; LL-2,6-diaminopimelate from (S)-tetrahydrodipicolinate (succinylase route): step 1/3. This is 2,3,4,5-tetrahydropyridine-2,6-dicarboxylate N-succinyltransferase from Serratia proteamaculans (strain 568).